A 638-amino-acid polypeptide reads, in one-letter code: Cell division control protein 45 homolog (638 aa).

The segment at 151-204 (ELSDEENSDSSNEREEEVEDDNRSVESYSSSDYQARSRRRFSEETTQRRAEIKE) is disordered. Positions 153-170 (SDEENSDSSNEREEEVED) are enriched in acidic residues. Basic and acidic residues predominate over residues 190–204 (RFSEETTQRRAEIKE).

Belongs to the CDC45 family. As to quaternary structure, interacts with sld3.

The protein localises to the nucleus. In terms of biological role, required for initiation of chromosomal DNA replication. May have a role in regulating the MCM proteins nda1 and nda4. In Schizosaccharomyces pombe (strain 972 / ATCC 24843) (Fission yeast), this protein is Cell division control protein 45 homolog (sna41).